The following is a 192-amino-acid chain: MNDQYVQKTSKDGYRSRSAYKLVEMDNKFKLFQEGQKIIDLGASPGGWSQVASQKGANVVALDIKPMNAINGVEFIQCDIINEFEILREKFKDQKFDVILSDMAPESCGLKSLDHIRIMLLCEAALNFAKHFLSHGGTFVVKIFQGESDKDFCNELKKMFKTVKYFKPKSSRSESTEMYLVSLGFIGSKPSI.

Residues glycine 46, tryptophan 48, aspartate 63, aspartate 79, and aspartate 102 each coordinate S-adenosyl-L-methionine. The active-site Proton acceptor is the lysine 142.

It belongs to the class I-like SAM-binding methyltransferase superfamily. RNA methyltransferase RlmE family.

It localises to the cytoplasm. It carries out the reaction uridine(2552) in 23S rRNA + S-adenosyl-L-methionine = 2'-O-methyluridine(2552) in 23S rRNA + S-adenosyl-L-homocysteine + H(+). In terms of biological role, specifically methylates the uridine in position 2552 of 23S rRNA at the 2'-O position of the ribose in the fully assembled 50S ribosomal subunit. This is Ribosomal RNA large subunit methyltransferase E from Wolbachia pipientis wMel.